The sequence spans 593 residues: ATP-dependent lipid A-core flippase (593 aa).

The next 6 membrane-spanning stretches (helical) occupy residues 33–53 (IGIVVLAVVTMGVVAATEAGI), 75–95 (WYVPIAVIGLALVRGVSQYTS), 137–157 (AIVFEVNQILSVLTGVMVTLV), 164–184 (IFLLGYLFYLNWRLTLIVAVI), 262–282 (QPLTQFLASIALAVVITIAVV), and 292–312 (GGFVAFVTSMLLVISPLKHLI). Residues 37–320 (VLAVVTMGVV…LIDVNQPLQR (284 aa)) form the ABC transmembrane type-1 domain. The 235-residue stretch at 352 to 586 (IEFRAVSFDY…GGLYAHLHRI (235 aa)) folds into the ABC transporter domain. 386 to 393 (GPSGSGKT) contributes to the ATP binding site.

Belongs to the ABC transporter superfamily. Lipid exporter (TC 3.A.1.106) family. Homodimer.

The protein localises to the cell inner membrane. It carries out the reaction ATP + H2O + lipid A-core oligosaccharideSide 1 = ADP + phosphate + lipid A-core oligosaccharideSide 2.. Its function is as follows. Involved in lipopolysaccharide (LPS) biosynthesis. Translocates lipid A-core from the inner to the outer leaflet of the inner membrane. Transmembrane domains (TMD) form a pore in the inner membrane and the ATP-binding domain (NBD) is responsible for energy generation. In Burkholderia orbicola (strain AU 1054), this protein is ATP-dependent lipid A-core flippase.